The following is a 95-amino-acid chain: Small ribosomal subunit protein bS20 (95 aa).

Belongs to the bacterial ribosomal protein bS20 family.

Binds directly to 16S ribosomal RNA. The polypeptide is Small ribosomal subunit protein bS20 (Ehrlichia ruminantium (strain Gardel)).